Here is a 303-residue protein sequence, read N- to C-terminus: UDP-3-O-acyl-N-acetylglucosamine deacetylase (303 aa).

Positions 77, 236, and 240 each coordinate Zn(2+). Catalysis depends on histidine 263, which acts as the Proton donor.

Belongs to the LpxC family. Zn(2+) is required as a cofactor.

The enzyme catalyses a UDP-3-O-[(3R)-3-hydroxyacyl]-N-acetyl-alpha-D-glucosamine + H2O = a UDP-3-O-[(3R)-3-hydroxyacyl]-alpha-D-glucosamine + acetate. It functions in the pathway glycolipid biosynthesis; lipid IV(A) biosynthesis; lipid IV(A) from (3R)-3-hydroxytetradecanoyl-[acyl-carrier-protein] and UDP-N-acetyl-alpha-D-glucosamine: step 2/6. In terms of biological role, catalyzes the hydrolysis of UDP-3-O-myristoyl-N-acetylglucosamine to form UDP-3-O-myristoylglucosamine and acetate, the committed step in lipid A biosynthesis. In Ruthia magnifica subsp. Calyptogena magnifica, this protein is UDP-3-O-acyl-N-acetylglucosamine deacetylase.